The primary structure comprises 939 residues: Dynamin-like GTPase MGM1, mitochondrial (939 aa).

The N-terminal 27 residues, 1–27 (MSAQLRAAAAITPAARRVISGPAAVRR), are a transit peptide targeting the mitochondrion. Residues 85–103 (FIRVPALFGGMMLGAVGWV) form a helical membrane-spanning segment. Over residues 170 to 183 (AGEGSGSGEGGPNG) the composition is skewed to gly residues. The tract at residues 170-196 (AGEGSGSGEGGPNGGPEPPRQSRAGAA) is disordered. The region spanning 249–522 (TVTLPSIVVI…LEQQMSSKLN (274 aa)) is the Dynamin-type G domain. Residues 259–266 (GSQSSGKS) are G1 motif. Residues S262, G264, K265, S266, S267, and G281 each coordinate GTP. S266 is a binding site for Mg(2+). The G2 motif stretch occupies residues 285-287 (ITR). The Mg(2+) site is built by T286 and D359. A G3 motif region spans residues 359 to 362 (DLPG). Positions 427 to 430 (TKMD) are G4 motif. Residues K428, D430, and S457 each coordinate GTP. The segment at 456–459 (ISKL) is G5 motif. The segment at 549-703 (SAESYLAASL…TSDGIEISLK (155 aa)) is stalk region. Residues 710-809 (DIQPNEWAQG…LSLRIQAAKS (100 aa)) form a paddle region region. The segment at 810-877 (RQCKTLTNKY…GGGLEKFARE (68 aa)) is stalk region. C812 and C821 are disulfide-bonded. The 95-residue stretch at 815–909 (LTNKYYCPEV…KIEELHRISS (95 aa)) folds into the GED domain.

The protein belongs to the TRAFAC class dynamin-like GTPase superfamily. Dynamin/Fzo/YdjA family. Oligomeric complex consisting of membrane-bound and soluble forms of MGM1. Post-translationally, cleavage of the transit peptide by mitochondrial processing protease (MPP) produces a long integral membrane form of MGM1 (L-MGM1). Further processing by the rhomboid protease PCP1 produces a short peripheral membrane form of MGM1 (S-MGM1). Both forms are required for full activity.

It localises to the mitochondrion inner membrane. Its subcellular location is the mitochondrion intermembrane space. It catalyses the reaction GTP + H2O = GDP + phosphate + H(+). In terms of biological role, dynamin-related GTPase that is essential for normal mitochondrial morphology by mediating fusion of the mitochondrial inner membranes, regulating cristae morphology and maintaining respiratory chain function. Exists in two forms: the transmembrane, long form (Dynamin-like GTPase MGM1, long form; L-MGM1), which is tethered to the inner mitochondrial membrane, and the short soluble form (Dynamin-like GTPase MGM1, short form; S-MGM1), which results from proteolytic cleavage and localizes in the intermembrane space. Both forms (L-MGM1 and S-MGM1) cooperate to catalyze the fusion of the mitochondrial inner membrane. The equilibrium between L-MGM1 and S-MGM1 is essential: excess levels of S-MGM1, following loss of mitochondrial membrane potential, lead to an impaired equilibrium between L-MGM1 and S-MGM1, inhibiting mitochondrial fusion. Plays a role in the maintenance and remodeling of mitochondrial cristae, some invaginations of the mitochondrial inner membrane that provide an increase in the surface area. Probably acts by forming helical filaments at the inside of inner membrane tubes with the shape and dimensions of crista junctions. Functionally, constitutes the transmembrane long form (L-MGM1) that plays a central role in mitochondrial inner membrane fusion and cristae morphology. L-MGM1 and the soluble short form (S-MGM1) form higher-order helical assemblies that coordinate the fusion of mitochondrial inner membranes. Inner membrane-anchored L-MGM1 molecules initiate membrane remodeling by recruiting soluble S-MGM1 to rapidly polymerize into a flexible cylindrical scaffold encaging the mitochondrial inner membrane. Once at the membrane surface, the formation of S-MGM1 helices induce bilayer curvature. MGM1 dimerization through the paddle region, which inserts into cardiolipin-containing membrane, promotes GTP hydrolysis and the helical assembly of a flexible MGM1 lattice on the membrane, which drives membrane curvature and mitochondrial fusion. Its function is as follows. Constitutes the soluble short form (S-MGM1) generated by cleavage by PCP1, which plays a central role in mitochondrial inner membrane fusion and cristae morphology. The transmembrane long form (L-MGM1) and the S-MGM1 form higher-order helical assemblies that coordinate the fusion of mitochondrial inner membranes. Inner membrane-anchored L-MGM1 molecules initiate membrane remodeling by recruiting soluble S-MGM1 to rapidly polymerize into a flexible cylindrical scaffold encaging the mitochondrial inner membrane. Once at the membrane surface, the formation of S-MGM1 helices induce bilayer curvature. MGM1 dimerization through the paddle region, which inserts into cardiolipin-containing membrane, promotes GTP hydrolysis and the helical assembly of a flexible MGM1 lattice on the membrane, which drives membrane curvature and mitochondrial fusion. Excess levels of S-MGM1 produced by cleavage by PCP1 following stress conditions that induce loss of mitochondrial membrane potential, lead to an impaired equilibrium between L-MGM1 and S-MGM1, thereby inhibiting mitochondrial fusion. The chain is Dynamin-like GTPase MGM1, mitochondrial from Chaetomium thermophilum (strain DSM 1495 / CBS 144.50 / IMI 039719) (Thermochaetoides thermophila).